The primary structure comprises 55 residues: Large ribosomal subunit protein bL33 (55 aa).

It belongs to the bacterial ribosomal protein bL33 family.

In Klebsiella pneumoniae (strain 342), this protein is Large ribosomal subunit protein bL33.